The sequence spans 787 residues: MAPAAGPRTGKHAKPQRSKTLKRKRGQEELSSLIQRVEDLDLKGIFKSFSDLPLSEPTASGLASSHYKTLTDIQSRAISHALKGRDILGAAKTGSGKTLAFLVPVLENLYRKQWAEHDGLGALILSPTRELAIQIFEVLRKIGRYHTFSAGLVIGGKSLKEEQERLGRMNILVCTPGRMLQHLDQTALFDTYNLQMLVLDEADRILDLGFQQTVDAIIGHLPKERQTLLFSATQTKKVSDLARLSLQDPEYVAVHETASSATPSKLQQHYVITPLPQKLDILWSFIRSNLKSKTMVFLSSGKQVRFVYESFRHLQPGIPLMHLHGRQKQGGRLDIVTRFSQSKHCVLFSTDVAARGLDFPAVDWVIQLDCPEDADTYIHRVGRTARYEREGRAVLFLDPSEEEGMLKRLEQKKVPIEKINIKANKQQSIKDQLQNMCFKDPELKYLGQKAFISYVKSVYIQKDKEIFKLKELKLDEFAASLGLPGAPRIKFIKGDDTKQRKNAPRAAAHLLSDDDDTDEEDGEKKSKKKEEPQVRTKYDRMFERRNQDVLAEHYSKLINDDGTMVAPNAGAGADADEDDDFLSVKRRFDAGDKDLGSSGDEDDESEKGNKKNVKVRREKLLKSKKKLLKFKGKGTKLVYDDEGNPHELYELEDEEQFKARGDAKDQQAKFLAEEAERTRLADMEDKEIAKQKRREKKEKRKARERELLAEAEEEETLVQLPPYEGDQDDEAPRPSKKPKVKFTEANDREEAEPWYKKSKKSSDQAAHTPRQIQTLEDLESLATGLLG.

The tract at residues 1–28 (MAPAAGPRTGKHAKPQRSKTLKRKRGQE) is disordered. A compositionally biased stretch (basic residues) spans 9–25 (TGKHAKPQRSKTLKRKR). Residues 47-75 (KSFSDLPLSEPTASGLASSHYKTLTDIQS) carry the Q motif motif. In terms of domain architecture, Helicase ATP-binding spans 78–252 (ISHALKGRDI…RLSLQDPEYV (175 aa)). Position 91–98 (91–98 (AKTGSGKT)) interacts with ATP. The short motif at 200–203 (DEAD) is the DEAD box element. Residues 278–437 (KLDILWSFIR…SIKDQLQNMC (160 aa)) form the Helicase C-terminal domain. 4 disordered regions span residues 494–542 (GDDT…DRMF), 560–579 (DDGTMVAPNAGAGADADEDD), 586–618 (RRFDAGDKDLGSSGDEDDESEKGNKKNVKVRRE), and 653–776 (DEEQ…QTLE). Residues 522–542 (GEKKSKKKEEPQVRTKYDRMF) show a composition bias toward basic and acidic residues. 2 stretches are compositionally biased toward basic and acidic residues: residues 586–595 (RRFDAGDKDL) and 656–690 (QFKARGDAKDQQAKFLAEEAERTRLADMEDKEIAK). Over residues 691-700 (QKRREKKEKR) the composition is skewed to basic residues. Positions 741–755 (KFTEANDREEAEPWY) are enriched in basic and acidic residues.

This sequence belongs to the DEAD box helicase family. DDX10/DBP4 subfamily. As to quaternary structure, interacts with the U3 and U14 snoRNAs. Associates with pre-ribosomal complexes.

It localises to the nucleus. It is found in the nucleolus. It catalyses the reaction ATP + H2O = ADP + phosphate + H(+). ATP-dependent RNA helicase required for ribosome biogenesis. Involved in the release of U14 snoRNA in pre-ribosomal complexes. Required for pre-rRNA cleavage at site A2. This Aspergillus fumigatus (strain ATCC MYA-4609 / CBS 101355 / FGSC A1100 / Af293) (Neosartorya fumigata) protein is ATP-dependent RNA helicase dbp4 (dbp4).